A 280-amino-acid chain; its full sequence is Large ribosomal subunit protein uL2 (280 aa).

Residues 229–280 (DHPHGGGEGKAPIGHPSPLTPWGKPTLGYKTRKKRKPSDRFIIQRANDKKEK) form a disordered region.

It belongs to the universal ribosomal protein uL2 family. As to quaternary structure, part of the 50S ribosomal subunit. Forms a bridge to the 30S subunit in the 70S ribosome.

One of the primary rRNA binding proteins. Required for association of the 30S and 50S subunits to form the 70S ribosome, for tRNA binding and peptide bond formation. It has been suggested to have peptidyltransferase activity; this is somewhat controversial. Makes several contacts with the 16S rRNA in the 70S ribosome. This Dictyoglomus turgidum (strain DSM 6724 / Z-1310) protein is Large ribosomal subunit protein uL2.